The following is a 419-amino-acid chain: Adenylosuccinate synthetase 1 (419 aa).

Residue 11 to 17 coordinates GTP; sequence GDEGKGK. Aspartate 12 serves as the catalytic Proton acceptor. Mg(2+) is bound by residues aspartate 12 and glycine 39. IMP contacts are provided by residues 12–15, 37–40, arginine 138, glutamine 220, and arginine 298; these read DEGK and NAGH. The active-site Proton donor is histidine 40. Substrate is bound at residue 294 to 300; sequence TVSKRPR. Residues arginine 300, 326 to 328, and 407 to 409 each bind GTP; these read NVD and SYG.

This sequence belongs to the adenylosuccinate synthetase family. In terms of assembly, homodimer. It depends on Mg(2+) as a cofactor.

It is found in the cytoplasm. The enzyme catalyses IMP + L-aspartate + GTP = N(6)-(1,2-dicarboxyethyl)-AMP + GDP + phosphate + 2 H(+). Its pathway is purine metabolism; AMP biosynthesis via de novo pathway; AMP from IMP: step 1/2. Plays an important role in the de novo pathway of purine nucleotide biosynthesis. Catalyzes the first committed step in the biosynthesis of AMP from IMP. The sequence is that of Adenylosuccinate synthetase 1 from Photorhabdus laumondii subsp. laumondii (strain DSM 15139 / CIP 105565 / TT01) (Photorhabdus luminescens subsp. laumondii).